Here is an 873-residue protein sequence, read N- to C-terminus: Potassium voltage-gated channel subfamily KQT member 3 (873 aa).

Positions 1–41 are disordered; it reads MGLKARRAAGAAGGGGGEGGGGGGGAANPAGGDSAVAGDEE. At 1 to 121 the chain is on the cytoplasmic side; that stretch reads MGLKARRAAG…IYDALERPRG (121 aa). Over residues 11–26 the composition is skewed to gly residues; that stretch reads AAGGGGGEGGGGGGGA. T82 carries the post-translational modification Phosphothreonine. The helical transmembrane segment at 122-144 threads the bilayer; it reads WALLYHALVFLIVLGCLILAVLT. The Extracellular segment spans residues 145-154; the sequence is TFKEYETVSG. A helical membrane pass occupies residues 155–176; sequence DWLLLLETFAIFIFGAEFALRI. Over 177–194 the chain is Cytoplasmic; the sequence is WAAGCCCRYKGWRGRLKF. The chain crosses the membrane as a helical span at residues 195–214; it reads ARKPLCMLDIFVLIASVPVV. The Extracellular segment spans residues 215-226; it reads AVGNQGNVLATS. A helical; Voltage-sensor membrane pass occupies residues 227 to 245; it reads LRSLRFLQILRMLRMDRRG. R244 contributes to the a 1,2-diacyl-sn-glycero-3-phospho-(1D-myo-inositol-4,5-bisphosphate) binding site. At 246 to 257 the chain is on the cytoplasmic side; the sequence is GTWKLLGSAICA. The helical transmembrane segment at 258–283 threads the bilayer; the sequence is HSKELITAWYIGFLTLILSSFLVYLV. An a 1,2-diacyl-sn-glycero-3-phospho-(1D-myo-inositol-4,5-bisphosphate)-binding site is contributed by K260. Residues 284–303 are Extracellular-facing; the sequence is EKDVPEMDAQGEEMKEEFET. Positions 304–316 form an intramembrane region, pore-forming; it reads YADALWWGLITLA. The Selectivity filter motif lies at 317–322; the sequence is TIGYGD. Over 317 to 327 the chain is Extracellular; that stretch reads TIGYGDKTPKT. A helical membrane pass occupies residues 328–354; that stretch reads WEGRLIAATFSLIGVSFFALPAGILGS. The Cytoplasmic portion of the chain corresponds to 355–873; the sequence is GLALKVQEQH…SIWTPSNKPT (519 aa). The segment at 357 to 538 is mediates interaction with calmodulin; the sequence is ALKVQEQHRQ…RLYKKKFKET (182 aa). K367 serves as a coordination point for a 1,2-diacyl-sn-glycero-3-phospho-(1D-myo-inositol-4,5-bisphosphate). Disordered stretches follow at residues 575–603, 723–742, and 766–873; these read PGPP…PRNE, RGGP…GSTY, and ELQG…NKPT. 3 stretches are compositionally biased toward polar residues: residues 588–601, 725–741, and 844–873; these read KGSA…QSPR, GPSS…SGST, and DPFT…NKPT.

It belongs to the potassium channel family. KQT (TC 1.A.1.15) subfamily. Kv7.3/KCNQ3 sub-subfamily. As to quaternary structure, heterotetramer with KCNQ2; forms heterotetrameric M-channel responsible for the native M-current. Interacts with calmodulin; the interaction is calcium-independent, constitutive and participates in the proper assembly of a functional M-channel. Heteromultimer with KCNQ5. May associate with KCNE2. Interacts with IQCJ-SCHIP1. Interacts (via the pore module) with SLC5A3/SMIT1; forms a coregulatory complex that alters ion selectivity, voltage dependence and gating kinetics of the channel. Post-translationally, KCNQ2/KCNQ3 are ubiquitinated by NEDD4L. Ubiquitination leads to protein degradation. Degradation induced by NEDD4L is inhibited by USP36. Expressed in brain and sympathetic ganglia. In brain, expressed in cortex, hippocampus and at much lower levels in cerebellum. In sympathetic ganglia, expressed at approximately equal levels in both superior cervical ganglia and prevertebral ganglia.

The protein localises to the cell membrane. The catalysed reaction is K(+)(in) = K(+)(out). It catalyses the reaction Rb(+)(in) = Rb(+)(out). It carries out the reaction Cs(+)(in) = Cs(+)(out). The enzyme catalyses Na(+)(in) = Na(+)(out). Phosphatidylinositol-4,5-bisphosphate (PIP2) potentiates the activation of KCNQ channels by enhancing the electro-mechanical coupling of the voltage-sensing domain (VSD) and the pore-forming domain (PD). In the closed state of the channel, PIP2 is anchored at the S2-S3 loop; upon channel activation, PIP2 interacts with the S4-S5 linker and is involved in channel gating. Calcium suppresses KCNQ2-KCNQ3 channel currents, with calcium-bound calmodulin inducing a change in channel configuration which leads to the reduction of channel affinity for PIP2 and subsequent current suppression. M-channel is blocked by XE991. In terms of biological role, pore-forming subunit of the voltage-gated potassium (Kv) M-channel which is responsible for the M-current, a key controller of neuronal excitability. M-channel is composed of pore-forming subunits KCNQ2 and KCNQ3 assembled as heterotetramers, each subunit containing a voltage sensing domain (VSD) and a pore-forming domain (PD). The native M-current has a slowly activating and deactivating potassium conductance which plays a critical role in determining the subthreshold electrical excitability of neurons as well as the responsiveness to synaptic inputs. M-channel is selectively permeable in vitro to other cations besides potassium, in decreasing order of affinity K(+) &gt; Rb(+) &gt; Cs(+) &gt; Na(+). M-channel association with SLC5A3/SMIT1 alters channel ion selectivity, increasing Na(+) and Cs(+) permeation relative to K(+). Suppressed by activation of M1 muscarinic acetylcholine receptors. KCNQ3 also associates with KCNQ5 to form a functional channel in vitro and may also contribute to the M-current in brain. The sequence is that of Potassium voltage-gated channel subfamily KQT member 3 from Rattus norvegicus (Rat).